The chain runs to 346 residues: Growth hormone-inducible transmembrane protein (346 aa).

A mitochondrion-targeting transit peptide spans 1-45 (MLAARLVCLRTLPSRVFQPTFITKASPLVKNSITKNQWLVTPSRE). Over 46 to 83 (YATKTRIRTHRGKTGQELKEAALEPSMEKIFKIDQMGR) the chain is Mitochondrial matrix. Residues 84–104 (WFVAGGAAVGLGALCYYGLGM) form a helical membrane-spanning segment. The Mitochondrial intermembrane portion of the chain corresponds to 105 to 126 (SNEIGAIEKAVIWPQYVKDRIH). Residues 127 to 147 (STYMYLAGSIGLTALSALAVA) traverse the membrane as a helical segment. Residues 148–160 (RTPALMNFMMTGS) are Mitochondrial matrix-facing. The helical transmembrane segment at 161–181 (WVTIGATFAAMIGAGMLVHSI) threads the bilayer. Residues 182–191 (SYEQSPGPKH) are Mitochondrial intermembrane-facing. Residues 192–212 (LAWMLHSGVMGAVVAPLTILG) traverse the membrane as a helical segment. Residues 213–214 (GP) lie on the Mitochondrial matrix side of the membrane. A helical membrane pass occupies residues 215 to 235 (LLLRAAWYTAGIVGGLSTVAM). Over 236-245 (CAPSEKFLNM) the chain is Mitochondrial intermembrane. A helical membrane pass occupies residues 246 to 266 (GAPLGVGLGLVFASSLGSMFL). The Mitochondrial matrix portion of the chain corresponds to 267–272 (PPTSVA). Residues 273-293 (GATLYSVAMYGGLVLFSMFLL) traverse the membrane as a helical segment. Residues 294–346 (YDTQKVIKRAEITPMYGAQKYDPINSMLTIYMDTLNIFMRVATMLATGSNRKK) are Mitochondrial intermembrane-facing.

This sequence belongs to the BI1 family. Interacts with LETM1 and AFG3L2. In terms of processing, undergoes AFG3L2-mediated proteolytic degradation, upon hyperpolarization of mitochondria.

It is found in the mitochondrion inner membrane. It catalyses the reaction Ca(2+)(in) + 2 H(+)(out) = Ca(2+)(out) + 2 H(+)(in). The catalysed reaction is K(+)(in) + H(+)(out) = K(+)(out) + H(+)(in). Plays an important role in maintenance of mitochondrial morphology and in mediating either calcium or potassium/proton antiport. Mediates proton-dependent calcium efflux from mitochondrion. Also functions as an electroneutral mitochondrial proton/potassium exchanger. Required for the mitochondrial tubular network and cristae organization. Involved in apoptotic release of cytochrome c. Inhibits AFG3L2 proteolytic activity, stimulating respiration and stabilizing respiratory enzymes in actively respiring mitochondria. However, when mitochondria become hyperpolarized, GHITM loses its inhibitory activity toward AFG3L2 and the now active AFG3L2 turns first on GHITM and, if hyperpolarization persists, on other proteins of the mitochondria, leading to a broad remodeling of the mitochondrial proteome. The chain is Growth hormone-inducible transmembrane protein (Ghitm) from Mus musculus (Mouse).